The primary structure comprises 233 residues: Phosphoribosylformylglycinamidine synthase subunit PurQ (233 aa).

A Glutamine amidotransferase type-1 domain is found at S3 to A233. The active-site Nucleophile is the C87. Catalysis depends on residues H204 and E206.

Part of the FGAM synthase complex composed of 1 PurL, 1 PurQ and 2 PurS subunits.

The protein localises to the cytoplasm. The catalysed reaction is N(2)-formyl-N(1)-(5-phospho-beta-D-ribosyl)glycinamide + L-glutamine + ATP + H2O = 2-formamido-N(1)-(5-O-phospho-beta-D-ribosyl)acetamidine + L-glutamate + ADP + phosphate + H(+). It carries out the reaction L-glutamine + H2O = L-glutamate + NH4(+). Its pathway is purine metabolism; IMP biosynthesis via de novo pathway; 5-amino-1-(5-phospho-D-ribosyl)imidazole from N(2)-formyl-N(1)-(5-phospho-D-ribosyl)glycinamide: step 1/2. Its function is as follows. Part of the phosphoribosylformylglycinamidine synthase complex involved in the purines biosynthetic pathway. Catalyzes the ATP-dependent conversion of formylglycinamide ribonucleotide (FGAR) and glutamine to yield formylglycinamidine ribonucleotide (FGAM) and glutamate. The FGAM synthase complex is composed of three subunits. PurQ produces an ammonia molecule by converting glutamine to glutamate. PurL transfers the ammonia molecule to FGAR to form FGAM in an ATP-dependent manner. PurS interacts with PurQ and PurL and is thought to assist in the transfer of the ammonia molecule from PurQ to PurL. This is Phosphoribosylformylglycinamidine synthase subunit PurQ from Rhodopseudomonas palustris (strain ATCC BAA-98 / CGA009).